We begin with the raw amino-acid sequence, 225 residues long: Ribose-5-phosphate isomerase A (225 aa).

Substrate is bound by residues 26 to 29, 82 to 85, and 95 to 98; these read TGST, DGAD, and KGGG. Catalysis depends on E104, which acts as the Proton acceptor. Position 122 (K122) interacts with substrate.

Belongs to the ribose 5-phosphate isomerase family. Homodimer.

It carries out the reaction aldehydo-D-ribose 5-phosphate = D-ribulose 5-phosphate. It functions in the pathway carbohydrate degradation; pentose phosphate pathway; D-ribose 5-phosphate from D-ribulose 5-phosphate (non-oxidative stage): step 1/1. In terms of biological role, catalyzes the reversible conversion of ribose-5-phosphate to ribulose 5-phosphate. This Streptococcus sanguinis (strain SK36) protein is Ribose-5-phosphate isomerase A.